The primary structure comprises 465 residues: Hydroxyacid-oxoacid transhydrogenase, mitochondrial (465 aa).

This sequence belongs to the iron-containing alcohol dehydrogenase family. Hydroxyacid-oxoacid transhydrogenase subfamily.

It is found in the mitochondrion. It catalyses the reaction (S)-3-hydroxybutanoate + 2-oxoglutarate = (R)-2-hydroxyglutarate + acetoacetate. The catalysed reaction is 4-hydroxybutanoate + 2-oxoglutarate = (R)-2-hydroxyglutarate + succinate semialdehyde. In terms of biological role, catalyzes the cofactor-independent reversible oxidation of gamma-hydroxybutyrate (GHB) to succinic semialdehyde (SSA) coupled to reduction of 2-ketoglutarate (2-KG) to D-2-hydroxyglutarate (D-2-HG). L-3-hydroxybutyrate (L-3-OHB) is also a substrate for HOT when using 2-KG as hydrogen acceptor, resulting in the formation of D-2-HG. The polypeptide is Hydroxyacid-oxoacid transhydrogenase, mitochondrial (Caenorhabditis elegans).